The chain runs to 73 residues: Translation initiation factor IF-1 (73 aa).

Residues 1–72 (MAKEDVIEVE…SRGRITYRYR (72 aa)) enclose the S1-like domain.

Belongs to the IF-1 family. In terms of assembly, component of the 30S ribosomal translation pre-initiation complex which assembles on the 30S ribosome in the order IF-2 and IF-3, IF-1 and N-formylmethionyl-tRNA(fMet); mRNA recruitment can occur at any time during PIC assembly.

Its subcellular location is the cytoplasm. In terms of biological role, one of the essential components for the initiation of protein synthesis. Stabilizes the binding of IF-2 and IF-3 on the 30S subunit to which N-formylmethionyl-tRNA(fMet) subsequently binds. Helps modulate mRNA selection, yielding the 30S pre-initiation complex (PIC). Upon addition of the 50S ribosomal subunit IF-1, IF-2 and IF-3 are released leaving the mature 70S translation initiation complex. The polypeptide is Translation initiation factor IF-1 (Rubrobacter xylanophilus (strain DSM 9941 / JCM 11954 / NBRC 16129 / PRD-1)).